Consider the following 294-residue polypeptide: Shikimate dehydrogenase (NADP(+)) (294 aa).

Residues 23–25 (SRS) and Thr70 each bind shikimate. Catalysis depends on Lys74, which acts as the Proton acceptor. Asn95 and Asp110 together coordinate shikimate. NADP(+)-binding positions include 135–139 (GAGGA), 159–164 (NRTASR), and Met232. Tyr234 lines the shikimate pocket. Position 255 (Gly255) interacts with NADP(+).

The protein belongs to the shikimate dehydrogenase family. Homodimer.

It carries out the reaction shikimate + NADP(+) = 3-dehydroshikimate + NADPH + H(+). The protein operates within metabolic intermediate biosynthesis; chorismate biosynthesis; chorismate from D-erythrose 4-phosphate and phosphoenolpyruvate: step 4/7. Involved in the biosynthesis of the chorismate, which leads to the biosynthesis of aromatic amino acids. Catalyzes the reversible NADPH linked reduction of 3-dehydroshikimate (DHSA) to yield shikimate (SA). The sequence is that of Shikimate dehydrogenase (NADP(+)) from Cupriavidus pinatubonensis (strain JMP 134 / LMG 1197) (Cupriavidus necator (strain JMP 134)).